The sequence spans 404 residues: MTMSARVRKMALPSNCDLSDVEMICDNVLGCLEDLDSSRVVSRVTSREDVDESTIGDLISLDCVSLETPLFSFLFLGVTLFLFLSLLQQSLVFLLGVFLRLVQLVGHFLLLLMGEQIGVIDKAMSHIPLPEVGQHSQQVQIQHLVERRFGLDVVTAIVVIGDNELFQVVGHQFRVGIMSDGQRSQQSQNSGMNVASSSRGRHQLVPDRPGSQLSSQKLSSLVPLARIAAAEIPCAVQQSLSRLFARSVQNRQVQRPHLDPQRQRNIVGVFGVQHGRAVLLCALGGDLIEKRPNQLVRVVKVLVDKFPRRLPKRLVHLVHLGRGSLVHCRCDRVCQQRGCCHLWHCGGHFFVGLVSWIVDETAACVVFCLFKVVSETQRISSLPRYMHRELNTAGVVWGCGGKHM.

3 helical membrane-spanning segments follow: residues 73 to 93 (FLFL…SLVF), 94 to 114 (LLGV…LLMG), and 149 to 169 (FGLD…FQVV). Residues 180–214 (DGQRSQQSQNSGMNVASSSRGRHQLVPDRPGSQLS) form a disordered region. A compositionally biased stretch (polar residues) spans 181 to 198 (GQRSQQSQNSGMNVASSS). Residues 349 to 369 (FFVGLVSWIVDETAACVVFCL) traverse the membrane as a helical segment.

The protein localises to the peroxisome membrane. Its function is as follows. Essential for the import of peroxisomal matrix proteins. This Yarrowia lipolytica (strain CLIB 122 / E 150) (Yeast) protein is Peroxisomal biogenesis factor 9 (PEX9).